The chain runs to 147 residues: RxLR effector protein Avr3a (147 aa).

Residues 1-21 form the signal peptide; the sequence is MRLAIMLSATAVAINFATCSA. Positions 44-59 match the RxLR-dEER motif; sequence RLLRKNEENEETSEER. N6-acetyllysine is present on lysine 48. Residues 77–147 are effector domain; that stretch reads ALTKRADAKK…YMMHLGLTGY (71 aa).

This sequence belongs to the RxLR effector family. Forms homodimers via the RxLR-dEER motif. Interacts with host E3 ligase CMPG1. Interacts with host DRP2. Proteolytically cleaved. The cleavage site directly after the RxLR sequence and the high conservation among other effector proteins suggest that the RxLR motif might play a crucial role in the intracellular processing before secretion. Post-translationally, glycosylated. In terms of processing, N-acetylated at Lys-48 after cleavage.

It is found in the secreted. Its subcellular location is the host cytoplasm. The protein resides in the host endosome. Its function is as follows. Multifunctional effector that can suppress host BAK1/SERK3-mediated immunity through at least two different pathways. Manipulates plant immunity by targeting and stabilizing host E3 ligase CMPG1. Preventing the normal 26S proteasome-dependent degradation of potato CMPG1, and thus potentially of its protein substrates in the host cell, further abolishes host cell death during the biotrophic phase of infection. Also associates with the dynamin-related protein 2 (DRP2), a plant GTPase involved in immune receptor-mediated endocytosis. The Avr3A(KI) form is recognized by R3a which triggers R3a-mediated hypersensitivity and suppresses INF1-induced cell death. The polypeptide is RxLR effector protein Avr3a (Phytophthora infestans (Potato late blight agent)).